The primary structure comprises 253 residues: Probable U2 small nuclear ribonucleoprotein A' (253 aa).

LRR repeat units lie at residues 20-41, 43-64, 65-86, and 89-110; these read NMREINLRGQKIPVIENMGVTR, QFDVIDLTDNDIRKLDNFPTFS, RLNTLYLHNNRINYIAPDIATK, and NLKTLALTNNNICELGDIEPLA. One can recognise an LRRCT domain in the interval 123–161; the sequence is NPITHKDNYRMYMIYKLPTVRVIDFNRVRLTEREAAKKM. 2 disordered regions span residues 163 to 205 and 232 to 253; these read KGKS…EDRE and VPEKGWNRQMDQNGADGEAMES. Residues 169–182 are compositionally biased toward basic and acidic residues; sequence KARDAIQKSVHTED.

The protein belongs to the U2 small nuclear ribonucleoprotein A family. In terms of assembly, interacts with rnp-3.

Its subcellular location is the nucleus. Its function is as follows. This protein is associated with sn-RNP U2. It helps the A' protein to bind stem loop IV of U2 snRNA. Required maternally for early embryonic development and zygotically for germline and somatic development. Has a role in the switch from mitosis to meiosis. Might function in alternative splicing. This is Probable U2 small nuclear ribonucleoprotein A' (mog-2) from Caenorhabditis elegans.